A 287-amino-acid chain; its full sequence is Mitochondrial dicarboxylate carrier (287 aa).

Solcar repeat units lie at residues 7–87 (SRWY…MRDY), 100–187 (NKVL…AKQL), and 196–279 (DNIF…LRKH). 3 helical membrane passes run 9–29 (WYFGGLASCGAACCTHPLDLL), 62–81 (GLSASLCRQMTYSLTRFAIY), and 102–122 (VLLGGISGLTGGFVGTPADLV). The residue at position 158 (lysine 158) is an N6-acetyllysine. A run of 3 helical transmembrane segments spans residues 162–181 (GATMASSRGALVTVGQLSCY), 202–222 (FVSSFIAGGCATFLCQPLDVL), and 254–274 (GLFPAGIRLIPHTVLTFMFLE).

This sequence belongs to the mitochondrial carrier (TC 2.A.29) family. As to expression, expressed at very high levels in white adipose tissue. And at low levels in brown adipose tissue, kidney and liver.

Its subcellular location is the mitochondrion inner membrane. The catalysed reaction is (S)-malate(in) + phosphate(out) = (S)-malate(out) + phosphate(in). It carries out the reaction malonate(out) + (S)-malate(in) = malonate(in) + (S)-malate(out). The enzyme catalyses (S)-malate(in) + succinate(out) = (S)-malate(out) + succinate(in). It catalyses the reaction (S)-malate(in) + sulfate(out) = (S)-malate(out) + sulfate(in). The catalysed reaction is malonate(out) + phosphate(in) = malonate(in) + phosphate(out). It carries out the reaction succinate(out) + phosphate(in) = succinate(in) + phosphate(out). The enzyme catalyses sulfate(out) + phosphate(in) = sulfate(in) + phosphate(out). It catalyses the reaction malonate(out) + succinate(in) = malonate(in) + succinate(out). Regulated by circadian protein CLOCK (Circadian Locomotor Output Cycles Kaput). Its function is as follows. Catalyzes the electroneutral exchange or flux of physiologically important metabolites such as dicarboxylates (malonate, malate, succinate), inorganic sulfur-containing anions, and phosphate, across mitochondrial inner membrane. Plays an important role in gluconeogenesis, fatty acid metabolism, urea synthesis, and sulfur metabolism, particularly in liver, by supplying the substrates for the different metabolic processes. Regulates fatty acid release from adipocytes, and contributes to systemic insulin sensitivity. The sequence is that of Mitochondrial dicarboxylate carrier from Mus musculus (Mouse).